The chain runs to 332 residues: tRNA dimethylallyltransferase 2 (332 aa).

ATP is bound at residue 15 to 22 (GPTASGKT). 17 to 22 (TASGKT) is a substrate binding site. Interaction with substrate tRNA regions lie at residues 40–43 (DSVM) and 164–168 (QRIQR).

The protein belongs to the IPP transferase family. Monomer. Mg(2+) is required as a cofactor.

The catalysed reaction is adenosine(37) in tRNA + dimethylallyl diphosphate = N(6)-dimethylallyladenosine(37) in tRNA + diphosphate. Its function is as follows. Catalyzes the transfer of a dimethylallyl group onto the adenine at position 37 in tRNAs that read codons beginning with uridine, leading to the formation of N6-(dimethylallyl)adenosine (i(6)A). The chain is tRNA dimethylallyltransferase 2 from Hahella chejuensis (strain KCTC 2396).